Reading from the N-terminus, the 429-residue chain is MKKFDKSIAAFEEAQDLMPGGVNSPVRAFKSVGMNPLFMERGKGSKVYDIDGNEYIDYVLSWGPLIHGHANDRVVEALKSVAERGTSFGAPTEIENKLAKLVIERVPSIEIVRMVNSGTEATMSALRLARGYTGRNKILKFIGCYHGHGDSLLIKAGSGVATLGLPDSPGVPEGVAKNTITVAYNDLESVKYAFEQFGDDIACVIVEPVAGNMGVVPPQPGFLEGLREVTEQNGALLIFDEVMTGFRVAYNCGQGYYGVTPDLTCLGKVIGGGLPVGAYGGKAEIMRQVAPSGPIYQAGTLSGNPLAMAAGYETLVQLTPESYVEFERKAEMLEAGLRKAAEKHGIPHHINRAGSMIGIFFTDEPVINYDAAKSSNLEFFAAYYREMVEQGVFLPPSQFEGLFLSTAHSDADIEATIAAAEIAMSKLKA.

K268 is subject to N6-(pyridoxal phosphate)lysine.

It belongs to the class-III pyridoxal-phosphate-dependent aminotransferase family. HemL subfamily. Homodimer. The cofactor is pyridoxal 5'-phosphate.

The protein localises to the cytoplasm. It catalyses the reaction (S)-4-amino-5-oxopentanoate = 5-aminolevulinate. The protein operates within porphyrin-containing compound metabolism; protoporphyrin-IX biosynthesis; 5-aminolevulinate from L-glutamyl-tRNA(Glu): step 2/2. This is Glutamate-1-semialdehyde 2,1-aminomutase 2 from Bacillus cereus (strain B4264).